The following is a 593-amino-acid chain: Mitochondrial sodium/calcium exchanger protein (593 aa).

The signal sequence occupies residues 1 to 20; sequence MGPLWALRVAGALSVAGVLA. The Extracellular segment spans residues 21-93; sequence GHDGSQRAGQ…GAFCTFPSSL (73 aa). The N-linked (GlcNAc...) asparagine glycan is linked to Asn58. Residues 94–114 form a helical membrane-spanning segment; it reads LPLSVSLYALWLLYLFVILGV. The Cytoplasmic portion of the chain corresponds to 115 to 135; it reads TAEKFFCPNLSAISTNLKLSH. The helical transmembrane segment at 136 to 158 threads the bilayer; it reads NGLGVVGHSLTPALHGVTFLAFG. At 159–178 the chain is on the extracellular side; that stretch reads NGAPDIFSAVVAFSDPRTAG. A helical transmembrane segment spans residues 179–199; the sequence is LAVGAIFGAGIFVTTVVAGGI. At 200 to 215 the chain is on the cytoplasmic side; it reads ALVKPFAAASRPFLRD. The chain crosses the membrane as a helical span at residues 216-236; it reads VIFYMVAVFLTFLVLYFGYIT. Residues 237 to 239 are Extracellular-facing; that stretch reads LGE. A helical transmembrane segment spans residues 240–260; it reads ALGYLGLYVFYVFTVVLCTWI. Topologically, residues 261 to 334 are cytoplasmic; that stretch reads HRWQRGDGPP…KWRRKPWYWR (74 aa). The span at 268 to 277 shows a compositional bias: pro residues; that stretch reads GPPPPGPWEP. The disordered stretch occupies residues 268-291; it reads GPPPPGPWEPAIPTDAEEQESSGT. A helical transmembrane segment spans residues 335-355; it reads LFKVLKVPVELVLLLTVPVVD. Residues 356 to 369 are Extracellular-facing; sequence PDKDDLNWKRPLNC. Residues 370-390 traverse the membrane as a helical segment; the sequence is LHIVTGPLLCIFTLKSGAYGL. The Cytoplasmic portion of the chain corresponds to 391 to 395; sequence YQIQG. A helical membrane pass occupies residues 396-416; the sequence is VFPVWALVALAGSVLAIIVFV. Topologically, residues 417–428 are extracellular; that stretch reads TTHNEEPPKYHC. A helical transmembrane segment spans residues 429-449; it reads VFAFLGFLSSAMWINAAATEL. Residues 450-454 lie on the Cytoplasmic side of the membrane; that stretch reads VNILR. The helical transmembrane segment at 455–475 threads the bilayer; that stretch reads TLGIIFELSNTVLGLTLLAWG. Residues 476–496 are Extracellular-facing; the sequence is NSIGDTFSDLTMARQGYPRMA. Residues 497-517 traverse the membrane as a helical segment; sequence FSACFGGIIFNILVGVGLGCL. The Cytoplasmic portion of the chain corresponds to 518–533; sequence LQMTNSQMVVKLEPDS. A helical membrane pass occupies residues 534 to 554; that stretch reads LLVWILAGALGLSLVFSFVAV. Residues 555 to 564 lie on the Extracellular side of the membrane; sequence PAQCFQLGKA. A helical transmembrane segment spans residues 565 to 585; it reads YGTCLILYYLVFLCVALLTEF. At 586-593 the chain is on the cytoplasmic side; that stretch reads RVIHLAAT.

It belongs to the Ca(2+):cation antiporter (CaCA) (TC 2.A.19) family. SLC24A subfamily.

It is found in the mitochondrion inner membrane. The enzyme catalyses Ca(2+)(in) + 3 Na(+)(out) = Ca(2+)(out) + 3 Na(+)(in). In terms of biological role, mitochondrial sodium/calcium antiporter that mediates sodium-dependent calcium efflux from mitochondrion, by mediating the exchange of 3 sodium ions per 1 calcium ion. Plays a central role in mitochondrial calcium homeostasis by mediating mitochondrial calcium extrusion: calcium efflux is essential for mitochondrial function and cell survival, notably in cardiomyocytes. Involved in B-lymphocyte chemotaxis. The sequence is that of Mitochondrial sodium/calcium exchanger protein from Gallus gallus (Chicken).